The following is a 955-amino-acid chain: Histone deacetylase 6 (955 aa).

Histone deacetylase regions lie at residues 15–337 and 425–749; these read TLIG…YAPF and METL…VLQN. Residue H146 is the 1 of the active site. The active-site 2 is the H561. The disordered stretch occupies residues 815–840; that stretch reads SIDMADQSSSSGSSSSSTRPSHNLEI. Positions 818 to 831 are enriched in low complexity; it reads MADQSSSSGSSSSS. A UBP-type zinc finger spans residues 853-951; it reads ATCPHLKEVK…SAAHESKFGE (99 aa). The Zn(2+) site is built by C855, H857, C875, C878, C887, C890, and C895. Positions 896–898 are ubiquitin binding; it reads GRF. Residues H902, H906, H912, C925, and C928 each coordinate Zn(2+). The tract at residues 924-931 is ubiquitin binding; sequence WCYPCDSY.

It belongs to the histone deacetylase family. HD type 2 subfamily. It depends on Zn(2+) as a cofactor.

The protein localises to the nucleus. The enzyme catalyses N(6)-acetyl-L-lysyl-[histone] + H2O = L-lysyl-[histone] + acetate. Its function is as follows. Probable histone deacetylase. Histone deacetylases are responsible for the deacetylation of lysine residues on the N-terminal part of the core histones (H2A, H2B, H3 and H4). Histone deacetylation gives a tag for epigenetic repression and plays an important role in transcriptional regulation, cell cycle progression and developmental events. Histone deacetylases act via the formation of large multiprotein complexes. This chain is Histone deacetylase 6 (hda-6), found in Caenorhabditis elegans.